A 104-amino-acid polypeptide reads, in one-letter code: MIPGEFLIEDGEIELNAGRATVTLSVANAGDRPIQVGSHYHFFETNPALKFDRKKARGMRLDIAAGTAVRFEPGQTREVQLVALAGKRVVYGFRGDVMGKLDKA.

This sequence belongs to the urease beta subunit family. As to quaternary structure, heterotrimer of UreA (gamma), UreB (beta) and UreC (alpha) subunits. Three heterotrimers associate to form the active enzyme.

Its subcellular location is the cytoplasm. It carries out the reaction urea + 2 H2O + H(+) = hydrogencarbonate + 2 NH4(+). It participates in nitrogen metabolism; urea degradation; CO(2) and NH(3) from urea (urease route): step 1/1. In Rhodopseudomonas palustris (strain BisB5), this protein is Urease subunit beta.